The primary structure comprises 764 residues: 5-methyltetrahydropteroyltriglutamate--homocysteine methyltransferase (764 aa).

5-methyltetrahydropteroyltri-L-glutamate contacts are provided by residues 16 to 19 and Lys121; that span reads RELK. L-homocysteine contacts are provided by residues 440–442 and Glu493; that span reads IGS. L-methionine is bound by residues 440–442 and Glu493; that span reads IGS. 5-methyltetrahydropteroyltri-L-glutamate-binding positions include 524–525 and Trp570; that span reads RC. An L-homocysteine-binding site is contributed by Asp608. Asp608 contacts L-methionine. Glu614 serves as a coordination point for 5-methyltetrahydropteroyltri-L-glutamate. Zn(2+) is bound by residues His650, Cys652, and Glu674. His703 serves as the catalytic Proton donor. Cys735 lines the Zn(2+) pocket.

Belongs to the vitamin-B12 independent methionine synthase family. Requires Zn(2+) as cofactor.

It carries out the reaction 5-methyltetrahydropteroyltri-L-glutamate + L-homocysteine = tetrahydropteroyltri-L-glutamate + L-methionine. It functions in the pathway amino-acid biosynthesis; L-methionine biosynthesis via de novo pathway; L-methionine from L-homocysteine (MetE route): step 1/1. Functionally, catalyzes the transfer of a methyl group from 5-methyltetrahydrofolate to homocysteine resulting in methionine formation. This is 5-methyltetrahydropteroyltriglutamate--homocysteine methyltransferase from Burkholderia lata (strain ATCC 17760 / DSM 23089 / LMG 22485 / NCIMB 9086 / R18194 / 383).